The primary structure comprises 305 residues: Serine/threonine-protein phosphatase PP-X homolog 3 (305 aa).

Mn(2+) contacts are provided by aspartate 53, histidine 55, aspartate 81, and asparagine 113. Histidine 114 (proton donor) is an active-site residue. Residues histidine 163 and histidine 237 each contribute to the Mn(2+) site.

This sequence belongs to the PPP phosphatase family. PP-4 (PP-X) subfamily. Mn(2+) serves as cofactor.

The enzyme catalyses O-phospho-L-seryl-[protein] + H2O = L-seryl-[protein] + phosphate. It catalyses the reaction O-phospho-L-threonyl-[protein] + H2O = L-threonyl-[protein] + phosphate. The sequence is that of Serine/threonine-protein phosphatase PP-X homolog 3 (Ppx3) from Paramecium tetraurelia.